Reading from the N-terminus, the 201-residue chain is Proteasome subunit beta type-2 (201 aa).

N-acetylmethionine is present on Met1.

The protein belongs to the peptidase T1B family. As to quaternary structure, the 26S proteasome consists of a 20S proteasome core and two 19S regulatory subunits. The 20S proteasome core is a barrel-shaped complex made of 28 subunits that are arranged in four stacked rings. The two outer rings are each formed by seven alpha subunits, and the two inner rings are formed by seven beta subunits. The proteolytic activity is exerted by three beta-subunits PSMB5, PSMB6 and PSMB7. Detected in liver (at protein level).

The protein localises to the cytoplasm. It localises to the nucleus. Its function is as follows. Non-catalytic component of the 20S core proteasome complex involved in the proteolytic degradation of most intracellular proteins. This complex plays numerous essential roles within the cell by associating with different regulatory particles. Associated with two 19S regulatory particles, forms the 26S proteasome and thus participates in the ATP-dependent degradation of ubiquitinated proteins. The 26S proteasome plays a key role in the maintenance of protein homeostasis by removing misfolded or damaged proteins that could impair cellular functions, and by removing proteins whose functions are no longer required. Associated with the PA200 or PA28, the 20S proteasome mediates ubiquitin-independent protein degradation. This type of proteolysis is required in several pathways including spermatogenesis (20S-PA200 complex) or generation of a subset of MHC class I-presented antigenic peptides (20S-PA28 complex). This Mus musculus (Mouse) protein is Proteasome subunit beta type-2 (Psmb2).